A 466-amino-acid polypeptide reads, in one-letter code: Cell division protein FtsP (466 aa).

The segment at residues 1–28 (MNYSRRSLFKKTLIATALSALPATLLAA) is a signal peptide (tat-type signal).

It belongs to the FtsP family. In terms of processing, predicted to be exported by the Tat system. The position of the signal peptide cleavage has not been experimentally proven.

It is found in the periplasm. Its function is as follows. Cell division protein that is required for growth during stress conditions. May be involved in protecting or stabilizing the divisomal assembly under conditions of stress. The sequence is that of Cell division protein FtsP from Actinobacillus succinogenes (strain ATCC 55618 / DSM 22257 / CCUG 43843 / 130Z).